Consider the following 388-residue polypeptide: Protochlorophyllide reductase A, chloroplastic (388 aa).

A chloroplast-targeting transit peptide spans 1–74 (MALQLLPSTL…KPSGKKTLRQ (74 aa)).

Belongs to the short-chain dehydrogenases/reductases (SDR) family. POR subfamily.

The protein localises to the plastid. It is found in the chloroplast. It catalyses the reaction chlorophyllide a + NADP(+) = protochlorophyllide a + NADPH + H(+). It functions in the pathway porphyrin-containing compound metabolism; chlorophyll biosynthesis. In terms of biological role, phototransformation of protochlorophyllide (Pchlide) to chlorophyllide (Chlide). The protein is Protochlorophyllide reductase A, chloroplastic (PORA) of Triticum aestivum (Wheat).